Here is a 238-residue protein sequence, read N- to C-terminus: Endothelin-3 (238 aa).

The first 16 residues, 1–16 (MEPGLWLLFGLTVTSA), serve as a signal peptide directing secretion. Positions 17-94 (AGFVPCSQSG…AEGAPEHHRS (78 aa)) are excised as a propeptide. A disordered region spans residues 24–89 (QSGDAGRRGV…GQEQAAEGAP (66 aa)). 2 disulfide bridges follow: Cys97–Cys111 and Cys99–Cys107. Residues 118–238 (INTPEQTVPY…PRCLFQEGAP (121 aa)) constitute a propeptide that is removed on maturation. Residues 159 to 173 (CACVGRYDKACLHFC) are endothelin-like. The tract at residues 183–219 (SRTAEKTDKEEEGKVEVKDQQSKQALDLHHPKLMPGS) is disordered. Positions 185-212 (TAEKTDKEEEGKVEVKDQQSKQALDLHH) are enriched in basic and acidic residues.

This sequence belongs to the endothelin/sarafotoxin family. Expressed in trophoblasts and placental stem villi vessels, but not in cultured placental smooth muscle cells.

The protein resides in the secreted. Endothelins are endothelium-derived vasoconstrictor peptides. The sequence is that of Endothelin-3 (EDN3) from Homo sapiens (Human).